The following is a 543-amino-acid chain: Telomerase Cajal body protein 1 homolog (543 aa).

A disordered region spans residues 95 to 128; sequence GRPKNAVESPHAGVPMETSLAAEEEANGDEEEES. Residues 116-127 show a composition bias toward acidic residues; the sequence is AEEEANGDEEEE. 3 WD repeats span residues 237-283, 291-329, and 378-421; these read PEGG…LRCS, DEVM…RFCD, and GHKG…QPLV.

The protein belongs to the TCAB1 family.

Its subcellular location is the nucleus. It is found in the cajal body. RNA chaperone that plays a key role in Cajal body formation. Specifically recognizes and binds the Cajal body box (CAB box) present in both small Cajal body RNAs (scaRNAs). Probably acts by mediating localization of scaRNAs to Cajal bodies. This is Telomerase Cajal body protein 1 homolog from Drosophila melanogaster (Fruit fly).